The primary structure comprises 279 residues: MLCLGLVVMRCQPLRRALNCSQGWWIIKIDIYDVFIGKSAFGNPCGVLELNGWLSDSELHQITREVGQPVTSFITHVDGRFHIRWFALDGEINLCGHGSLGAGAAILSKYQLENVVFNSKYGEVVISKRDDQYSLVLPSWEAKPCAVPVEISDLATDAIDVFSTRDLVLVLPSVEAVMNFQPDDDRLREINEYHALIVTAANGNSGYVLRYFAPKIGISEDLATGSAQCSLAPYWFKKLGSDALNARQLSMSGGYFEVERTTENSITVFAQAKRRAIAI.

It belongs to the PhzF family.

This is an uncharacterized protein from Vibrio cholerae serotype O1 (strain ATCC 39315 / El Tor Inaba N16961).